The following is a 163-amino-acid chain: Putative 4-hydroxy-4-methyl-2-oxoglutarate aldolase (163 aa).

Residues 76-79 and Arg-98 contribute to the substrate site; that span reads GDML. Asp-99 lines the a divalent metal cation pocket.

It belongs to the class II aldolase/RraA-like family. Homotrimer. A divalent metal cation is required as a cofactor.

It carries out the reaction 4-hydroxy-4-methyl-2-oxoglutarate = 2 pyruvate. It catalyses the reaction oxaloacetate + H(+) = pyruvate + CO2. Catalyzes the aldol cleavage of 4-hydroxy-4-methyl-2-oxoglutarate (HMG) into 2 molecules of pyruvate. Also contains a secondary oxaloacetate (OAA) decarboxylase activity due to the common pyruvate enolate transition state formed following C-C bond cleavage in the retro-aldol and decarboxylation reactions. The protein is Putative 4-hydroxy-4-methyl-2-oxoglutarate aldolase of Pseudomonas fluorescens (strain ATCC BAA-477 / NRRL B-23932 / Pf-5).